We begin with the raw amino-acid sequence, 237 residues long: 2,3,4,5-tetrahydropyridine-2,6-dicarboxylate N-acetyltransferase (237 aa).

This sequence belongs to the transferase hexapeptide repeat family. DapH subfamily.

The enzyme catalyses (S)-2,3,4,5-tetrahydrodipicolinate + acetyl-CoA + H2O = L-2-acetamido-6-oxoheptanedioate + CoA. It participates in amino-acid biosynthesis; L-lysine biosynthesis via DAP pathway; LL-2,6-diaminopimelate from (S)-tetrahydrodipicolinate (acetylase route): step 1/3. Catalyzes the transfer of an acetyl group from acetyl-CoA to tetrahydrodipicolinate. The polypeptide is 2,3,4,5-tetrahydropyridine-2,6-dicarboxylate N-acetyltransferase (Alkaliphilus metalliredigens (strain QYMF)).